The primary structure comprises 505 residues: tRNA-2-methylthio-N(6)-dimethylallyladenosine synthase (505 aa).

The region spanning 10 to 126 (RSYEVRTYGC…LPALLDRARH (117 aa)) is the MTTase N-terminal domain. C19, C55, C89, C163, C167, and C170 together coordinate [4Fe-4S] cluster. The 237-residue stretch at 149-385 (RESAYAGWVS…IALQEQITLE (237 aa)) folds into the Radical SAM core domain. One can recognise a TRAM domain in the interval 388–459 (QKLVGAEVEL…PHHLVADTPV (72 aa)).

Belongs to the methylthiotransferase family. MiaB subfamily. In terms of assembly, monomer. [4Fe-4S] cluster serves as cofactor.

The protein resides in the cytoplasm. It catalyses the reaction N(6)-dimethylallyladenosine(37) in tRNA + (sulfur carrier)-SH + AH2 + 2 S-adenosyl-L-methionine = 2-methylsulfanyl-N(6)-dimethylallyladenosine(37) in tRNA + (sulfur carrier)-H + 5'-deoxyadenosine + L-methionine + A + S-adenosyl-L-homocysteine + 2 H(+). Catalyzes the methylthiolation of N6-(dimethylallyl)adenosine (i(6)A), leading to the formation of 2-methylthio-N6-(dimethylallyl)adenosine (ms(2)i(6)A) at position 37 in tRNAs that read codons beginning with uridine. In Rhodococcus jostii (strain RHA1), this protein is tRNA-2-methylthio-N(6)-dimethylallyladenosine synthase.